Reading from the N-terminus, the 88-residue chain is Large ribosomal subunit protein bL31B (88 aa).

Belongs to the bacterial ribosomal protein bL31 family. Type B subfamily. Part of the 50S ribosomal subunit.

The polypeptide is Large ribosomal subunit protein bL31B (Pasteurella multocida (strain Pm70)).